The primary structure comprises 339 residues: tRNA dimethylallyltransferase (339 aa).

Residue Gly33–Thr40 participates in ATP binding. Residue Thr35–Thr40 participates in substrate binding. 2 interaction with substrate tRNA regions span residues Asp58–Leu61 and Gln182–Arg186.

It belongs to the IPP transferase family. In terms of assembly, monomer. Mg(2+) serves as cofactor.

It catalyses the reaction adenosine(37) in tRNA + dimethylallyl diphosphate = N(6)-dimethylallyladenosine(37) in tRNA + diphosphate. In terms of biological role, catalyzes the transfer of a dimethylallyl group onto the adenine at position 37 in tRNAs that read codons beginning with uridine, leading to the formation of N6-(dimethylallyl)adenosine (i(6)A). In Acidithiobacillus ferrooxidans (strain ATCC 23270 / DSM 14882 / CIP 104768 / NCIMB 8455) (Ferrobacillus ferrooxidans (strain ATCC 23270)), this protein is tRNA dimethylallyltransferase.